Reading from the N-terminus, the 394-residue chain is 1-deoxy-D-xylulose 5-phosphate reductoisomerase (394 aa).

NADPH-binding residues include Thr-10, Gly-11, Ser-12, Ile-13, Gly-38, Arg-39, Asn-40, and Asn-123. Residue Lys-124 coordinates 1-deoxy-D-xylulose 5-phosphate. Glu-125 provides a ligand contact to NADPH. Mn(2+) is bound at residue Asp-149. 4 residues coordinate 1-deoxy-D-xylulose 5-phosphate: Ser-150, Glu-151, Ser-175, and His-198. Mn(2+) is bound at residue Glu-151. Gly-204 lines the NADPH pocket. 1-deoxy-D-xylulose 5-phosphate contacts are provided by Ser-211, Asn-216, Lys-217, and Glu-220. A Mn(2+)-binding site is contributed by Glu-220.

This sequence belongs to the DXR family. The cofactor is Mg(2+). Mn(2+) is required as a cofactor.

The enzyme catalyses 2-C-methyl-D-erythritol 4-phosphate + NADP(+) = 1-deoxy-D-xylulose 5-phosphate + NADPH + H(+). It functions in the pathway isoprenoid biosynthesis; isopentenyl diphosphate biosynthesis via DXP pathway; isopentenyl diphosphate from 1-deoxy-D-xylulose 5-phosphate: step 1/6. In terms of biological role, catalyzes the NADPH-dependent rearrangement and reduction of 1-deoxy-D-xylulose-5-phosphate (DXP) to 2-C-methyl-D-erythritol 4-phosphate (MEP). The sequence is that of 1-deoxy-D-xylulose 5-phosphate reductoisomerase from Cereibacter sphaeroides (strain KD131 / KCTC 12085) (Rhodobacter sphaeroides).